The primary structure comprises 355 residues: cAMP-dependent protein kinase catalytic subunit PRKX (355 aa).

An N-acetylmethionine modification is found at methionine 1. The segment at 1–42 is disordered; that stretch reads MEPPAGAAATVKDPDHDPVKTKVSAPAADPKPRTSSQKAGHS. The region spanning 46-300 is the Protein kinase domain; the sequence is WDTIATVGTG…AEDIKRHRWF (255 aa). Residues 52-60 and lysine 75 contribute to the ATP site; that span reads VGTGTFGRV. Residue aspartate 169 is the Proton acceptor of the active site. Threonine 200 is subject to Phosphothreonine. One can recognise an AGC-kinase C-terminal domain in the interval 301–355; it reads RGVEWESVPQRKLKPPIVPKLSGDGDISNFETYPESELDKTPSVSDKDLETFKNF. The tract at residues 316–355 is disordered; it reads PIVPKLSGDGDISNFETYPESELDKTPSVSDKDLETFKNF. Positions 337–355 are enriched in basic and acidic residues; the sequence is ELDKTPSVSDKDLETFKNF.

This sequence belongs to the protein kinase superfamily. AGC Ser/Thr protein kinase family. cAMP subfamily. In terms of assembly, like other cAMP-dependent protein kinases, the inactive holoenzyme is probably composed of 2 PRKX catalytic subunits and a dimer of regulatory subunits. Interacts (cAMP-dependent) specifically with the regulatory subunits PRKAR1A and PRKAR1B. Compared to other cAMP-dependent serine/threonine protein kinases, does not interact with the 2 other PKA regulatory subunits PRKAR2A and PRKAR2B. Interacts with PIN1 (via WW domain). Interacts with cAMP-dependent protein kinase inhibitor/PKI proteins; inhibits PRKX. Interacts with GPKOW. Interacts with SMAD6. Interacts with PKD1; involved in differentiation and controlled morphogenesis of the kidney. In terms of processing, phosphorylated; autophosphorylates in vitro. Widely expressed.

The protein localises to the cytoplasm. The protein resides in the nucleus. It catalyses the reaction L-seryl-[protein] + ATP = O-phospho-L-seryl-[protein] + ADP + H(+). The enzyme catalyses L-threonyl-[protein] + ATP = O-phospho-L-threonyl-[protein] + ADP + H(+). With respect to regulation, binding of cAMP to the PRKAR1A or PRKAR1B regulatory subunits induces dissociation of the holoenzyme heterotetramer. The released monomeric PRKX is then active and able to phosphorylate its substrates. In terms of biological role, serine/threonine protein kinase regulated by and mediating cAMP signaling in cells. Acts through phosphorylation of downstream targets that may include CREB, SMAD6 and PKD1 and has multiple functions in cellular differentiation and epithelial morphogenesis. Regulates myeloid cell differentiation through SMAD6 phosphorylation. Involved in nephrogenesis by stimulating renal epithelial cell migration and tubulogenesis. Also involved in angiogenesis through stimulation of endothelial cell proliferation, migration and vascular-like structure formation. The polypeptide is cAMP-dependent protein kinase catalytic subunit PRKX (Prkx) (Mus musculus (Mouse)).